A 1193-amino-acid chain; its full sequence is MSTSSFVHLHIHTEFSLADSTIRVPEKPEQAHPKKAKQANLLSRAVELGLPALAVTDLNNLFALIKFYKAAETVGIKPISGADLLIAEPEHTPWGMTLLCRDHAGYLNLSQLISRGWLEGHRPEGGVAVHPDWVRDHHKNLFALIGRHSLAGQLFAKGRADLAEQQLADWQHVFGNGLHLELTRTGRDGEEPFNQFALQVAGIRGIPVIASNDVRFLVPSDFLAHEARVCIASGRMLDDPKRPRTYSEQQYLRSSEEMAALFTDIPDALDNTRTLAQRCNIEMRLGTYFLPNYPVPNDETLDSWIRKQSHEGLEARLLKHPLAPGQTREDYVTRLEFELDTIIKMGFSGYFLIVADFIQWGKQQGIPIGPGRGSGAGSLVAWTLLITDLDPLPYNLLFERFLNPERVSMPDFDIDFCMERRDEVISYVARKYGRERVSQIITYGTMAAKAVVRDVGRVLGFPYGLVDSIAKLIPNTLGITLKDAMGEGETNDNASAELIQRYQAEEDVQELLNLARQLEDLTRNAGKHAGGVVIAPNPLTEFCPLFAEHDENGRGKNPVTQFDKNDVEEVGLVKFDFLGLRTLTIIDWAVKAINKRHARACIDPVDITALPLDDIPTYKDIFASGNTSAVFQFESSGMRRLLKDARPDRFEDLIALVSLYRPGPMDLIPEFTARKHGVQETIYPDPRTKNILKDTYGIMVYQEQVMQMAQIVGGYSLGSADLLRRAMGKKVPAEMAKHREIFREGAAKGGMDAVKADEIFDLMEKFAGYGFNKSHAAAYALVSYQTAWLKRHYPAEFMAATLSSDMDNTDKVVGFLDEARNLNLKVLRPNINHSVYMFEATHADTIQYGLGAIKGVGQSVCEAIVKERLHYGPYTSLLNFCTRVASAKLNRRALEAMIHAGALDELGKNRASVMLQLPEVIKATEQMSRERESGQNPLFGNADPSTPAIQLDLPECEEWPLTRMLNGERETLGLYFSGHPFDPYRKQVKELVGCDLNTSALERILGSQQRGNGEKRTWHPEVNTILAGLVVSVRRKGDSQVFVQLEDGRGRIECSAFSDALAEFGHLLTRDRILIVKGGLREDEFNDGYSLRIRQCWDYTQLCTDYAQRLLLRVDLRTSDAWERIDAILARYRPGNTPLRLDLLLNSTHGPVAGTLDLSGAQSVRIEQSLLDKLQKDPAVSTLKVKYTPPWVQ.

Belongs to the DNA polymerase type-C family. DnaE subfamily. DNA polymerase III contains a core (composed of alpha, epsilon and theta chains) that associates with a tau subunit. This core dimerizes to form the PolIII' complex. PolIII' associates with the gamma complex (composed of gamma, delta, delta', psi and chi chains) and with the beta chain to form the complete DNA polymerase III complex.

The protein localises to the cytoplasm. The enzyme catalyses DNA(n) + a 2'-deoxyribonucleoside 5'-triphosphate = DNA(n+1) + diphosphate. DNA polymerase III is a complex, multichain enzyme responsible for most of the replicative synthesis in bacteria. This DNA polymerase also exhibits 3' to 5' exonuclease activity. The alpha chain is the DNA polymerase. The polypeptide is DNA polymerase III subunit alpha (dnaE) (Xylella fastidiosa (strain 9a5c)).